A 167-amino-acid polypeptide reads, in one-letter code: I-Kappa-B like protein I1 (167 aa).

3 ANK repeats span residues histidine 54–glycine 86, phenylalanine 91–isoleucine 121, and leucine 125–isoleucine 154.

The protein belongs to the polydnaviridae I-Kappa-B-like protein family.

In terms of biological role, suppresses the host immune response through NF-kappa-B inactivation. Possesses ankyrin repeat domains required for NF-kappa-B binding but lacks the regulatory regions required for dissociation from NF-kappa-B and degradation. Therefore, prevents host NF-kappa-B release and subsequent activation. The polypeptide is I-Kappa-B like protein I1 (I1) (Microplitis demolitor (Parasitoid wasp)).